Here is a 444-residue protein sequence, read N- to C-terminus: Cadaverine/lysine antiporter (444 aa).

A run of 12 helical transmembrane segments spans residues Ile-7–Leu-27, Ile-35–Tyr-55, Ile-95–Leu-115, Ile-123–Val-143, Ile-149–Phe-169, Ile-193–Val-213, Leu-222–Leu-242, Leu-273–Val-293, Leu-323–Ala-343, Leu-354–Ile-374, Phe-384–Ala-404, and Ser-405–Arg-425.

This sequence belongs to the amino acid-polyamine-organocation (APC) superfamily. Basic amino acid/polyamine antiporter (APA) (TC 2.A.3.2) family.

It is found in the cell inner membrane. It catalyses the reaction cadaverine(in) + L-lysine(out) = cadaverine(out) + L-lysine(in). In terms of biological role, under acidic conditions, in the presence of lysine, functions as a cadaverine:lysine antiporter that facilitates the excretion of cadaverine and the uptake of lysine. In Escherichia coli O157:H7, this protein is Cadaverine/lysine antiporter (cadB).